The primary structure comprises 156 residues: Small ribosomal subunit protein uS7 (156 aa).

Belongs to the universal ribosomal protein uS7 family. In terms of assembly, part of the 30S ribosomal subunit. Contacts proteins S9 and S11.

One of the primary rRNA binding proteins, it binds directly to 16S rRNA where it nucleates assembly of the head domain of the 30S subunit. Is located at the subunit interface close to the decoding center, probably blocks exit of the E-site tRNA. The polypeptide is Small ribosomal subunit protein uS7 (Campylobacter hominis (strain ATCC BAA-381 / DSM 21671 / CCUG 45161 / LMG 19568 / NCTC 13146 / CH001A)).